The primary structure comprises 148 residues: Putative nickel-responsive regulator (148 aa).

Positions 76, 87, 89, and 95 each coordinate Ni(2+).

The protein belongs to the transcriptional regulatory CopG/NikR family. Ni(2+) serves as cofactor.

Its function is as follows. Transcriptional regulator. The polypeptide is Putative nickel-responsive regulator (Rhodopseudomonas palustris (strain ATCC BAA-98 / CGA009)).